The primary structure comprises 436 residues: Trigger factor (436 aa).

One can recognise a PPIase FKBP-type domain in the interval Gly-163–Pro-248.

The protein belongs to the FKBP-type PPIase family. Tig subfamily.

Its subcellular location is the cytoplasm. The catalysed reaction is [protein]-peptidylproline (omega=180) = [protein]-peptidylproline (omega=0). Involved in protein export. Acts as a chaperone by maintaining the newly synthesized protein in an open conformation. Functions as a peptidyl-prolyl cis-trans isomerase. The polypeptide is Trigger factor (Polaromonas sp. (strain JS666 / ATCC BAA-500)).